The following is an 89-amino-acid chain: Small ribosomal subunit protein uS15 (89 aa).

This sequence belongs to the universal ribosomal protein uS15 family. As to quaternary structure, part of the 30S ribosomal subunit. Forms a bridge to the 50S subunit in the 70S ribosome, contacting the 23S rRNA.

In terms of biological role, one of the primary rRNA binding proteins, it binds directly to 16S rRNA where it helps nucleate assembly of the platform of the 30S subunit by binding and bridging several RNA helices of the 16S rRNA. Forms an intersubunit bridge (bridge B4) with the 23S rRNA of the 50S subunit in the ribosome. The sequence is that of Small ribosomal subunit protein uS15 from Rhodospirillum centenum (strain ATCC 51521 / SW).